The chain runs to 205 residues: E3 ubiquitin-protein ligase complex slx8-rfp subunit rfp2 (205 aa).

The segment at 147-190 (CAKCGNELVSDEKKSIFAAKCGHLFCSTCAKELRKKTVPCPVQH) adopts an RING-type; degenerate zinc-finger fold.

In terms of assembly, part of an E3 ubiquitin complex including rfp1, rfp2 and slx8. Interacts with slx8.

Its subcellular location is the nucleus. The catalysed reaction is S-ubiquitinyl-[E2 ubiquitin-conjugating enzyme]-L-cysteine + [acceptor protein]-L-lysine = [E2 ubiquitin-conjugating enzyme]-L-cysteine + N(6)-ubiquitinyl-[acceptor protein]-L-lysine.. The protein operates within protein modification; protein ubiquitination. Mediates ubiquitination and subsequent desumoylation/degradation of sumoylated proteins and proteins containing SUMO-like domains. Involved in maintaining genome stability where it acts in the cellular response to DNA damage. The chain is E3 ubiquitin-protein ligase complex slx8-rfp subunit rfp2 (rfp2) from Schizosaccharomyces pombe (strain 972 / ATCC 24843) (Fission yeast).